A 418-amino-acid chain; its full sequence is 3-isopropylmalate dehydratase large subunit (418 aa).

[4Fe-4S] cluster contacts are provided by Cys-299, Cys-359, and Cys-362.

Belongs to the aconitase/IPM isomerase family. LeuC type 2 subfamily. In terms of assembly, heterodimer of LeuC and LeuD. Requires [4Fe-4S] cluster as cofactor.

It carries out the reaction (2R,3S)-3-isopropylmalate = (2S)-2-isopropylmalate. It functions in the pathway amino-acid biosynthesis; L-leucine biosynthesis; L-leucine from 3-methyl-2-oxobutanoate: step 2/4. Its function is as follows. Catalyzes the isomerization between 2-isopropylmalate and 3-isopropylmalate, via the formation of 2-isopropylmaleate. The sequence is that of 3-isopropylmalate dehydratase large subunit from Oleidesulfovibrio alaskensis (strain ATCC BAA-1058 / DSM 17464 / G20) (Desulfovibrio alaskensis).